The chain runs to 256 residues: MAEQIDLKTFKTDVADYEAARPEYPIGITDWITDEFLIDETSIILELGAGTGKFTPRIIASHPKEIIAVDVYPEMLDVLRKKFPNVDCRAGSAMAIPLEDESVDLVLCAQCFHWFANEEAMKEIYRVLKPNGKLGLVWNTRDDTVPWIEKVSKILGRYRKDAPSFVSWKWAELFPGHGFGKLRYCAFPFSRCLTVEELHTLMNSFSFIYKLPEEEKEKVHAELDEIAKTIPRVQNTDQIKLCYQTMAFSSEKEPAK.

Belongs to the methyltransferase superfamily.

Its subcellular location is the cytoplasm. The protein localises to the nucleus. Its function is as follows. Probable methyltransferase. This is an uncharacterized protein from Schizosaccharomyces pombe (strain 972 / ATCC 24843) (Fission yeast).